Here is a 721-residue protein sequence, read N- to C-terminus: Ophiobolin F synthase oblA (721 aa).

A (7Z)-ophiobola-7,19-dien-3-ol synthase region spans residues 5-325; the sequence is YDQPYSVLLD…RYNLKAEWNE (321 aa). Positions 97 and 101 each coordinate Mg(2+). Aspartate 97 contributes to the substrate binding site. Positions 97–101 match the DDXXD 1 motif; sequence DDVID. Substrate-binding positions include 185–188, asparagine 229, 233–237, and 316–317; these read RSLD, SFEKE, and RY. Positions 229–237 match the NSE/DTE motif; that stretch reads NDLFSFEKE. A geranylfarnesyl diphosphate synthase region spans residues 326 to 721; it reads LQMLRAKHGV…LRLMMEMLKV (396 aa). A disordered region spans residues 348-387; sequence SMDHIWKKGSTQGESKGEKRKRQSVNGTNGVNGTNGVKKP. Residues 372-384 are compositionally biased toward low complexity; sequence VNGTNGVNGTNGV. Isopentenyl diphosphate contacts are provided by lysine 432, arginine 435, and histidine 464. Aspartate 471 and aspartate 475 together coordinate Mg(2+). The short motif at 471-475 is the DDXXD 2 element; sequence DDLED. Arginine 480 serves as a coordination point for dimethylallyl diphosphate. Arginine 481 is an isopentenyl diphosphate binding site. The dimethylallyl diphosphate site is built by lysine 558, threonine 559, glutamine 597, asparagine 604, lysine 614, and lysine 624.

The protein in the N-terminal section; belongs to the terpene synthase family. It in the C-terminal section; belongs to the FPP/GGPP synthase family. Requires Mg(2+) as cofactor.

It carries out the reaction isopentenyl diphosphate + (2E,6E)-farnesyl diphosphate = (2E,6E,10E)-geranylgeranyl diphosphate + diphosphate. The enzyme catalyses isopentenyl diphosphate + (2E,6E,10E)-geranylgeranyl diphosphate = (2E,6E,10E,14E)-geranylfarnesyl diphosphate + diphosphate. It catalyses the reaction (2E,6E,10E,14E)-geranylfarnesyl diphosphate + H2O = ophiobolin F + diphosphate. It participates in secondary metabolite biosynthesis; terpenoid biosynthesis. In terms of biological role, bifunctional sesterterpene synthase; part of the gene cluster that mediates the biosynthesis of the sesterterpenes ophiobolins, fungal phytotoxins with potential anti-cancer activities. The first step of the pathway is performed by the sesterterpene synthase oblA that possesses both prenyl transferase and terpene cyclase activity, converting isopentenyl diphosphate and dimethylallyl diphosphate into geranylfarnesyl diphosphate (GFPP) and further converting GFPP into ophiobolin F, respectively. Other sesterterpenoids (C(25) terpenoids) are found as minor products of oblA. The cytochrome P450 monooxygenase oblB then catalyzes a four-step oxidative transformation of ophiobolin F to yield ophiobolin C. The FAD-dependent oxidoreductase oblC might be involved in a later oxidation step that produces ophiobolin A. The protein is Ophiobolin F synthase oblA of Cochliobolus heterostrophus (strain C5 / ATCC 48332 / race O) (Southern corn leaf blight fungus).